Here is a 608-residue protein sequence, read N- to C-terminus: Chaperone protein DnaK (608 aa).

Threonine 175 carries the phosphothreonine; by autocatalysis modification.

This sequence belongs to the heat shock protein 70 family.

Acts as a chaperone. The polypeptide is Chaperone protein DnaK (Finegoldia magna (strain ATCC 29328 / DSM 20472 / WAL 2508) (Peptostreptococcus magnus)).